Reading from the N-terminus, the 277-residue chain is Large ribosomal subunit protein uL2 (277 aa).

Residues 219 to 277 are disordered; sequence TVRGSVMNPNDHPHGGGEGKAPVGRKAPSTPWGKPALGLKTRNKKAKSNKLIVRRRNEK. Basic residues predominate over residues 259–277; sequence TRNKKAKSNKLIVRRRNEK.

It belongs to the universal ribosomal protein uL2 family. In terms of assembly, part of the 50S ribosomal subunit. Forms a bridge to the 30S subunit in the 70S ribosome.

Functionally, one of the primary rRNA binding proteins. Required for association of the 30S and 50S subunits to form the 70S ribosome, for tRNA binding and peptide bond formation. It has been suggested to have peptidyltransferase activity; this is somewhat controversial. Makes several contacts with the 16S rRNA in the 70S ribosome. This is Large ribosomal subunit protein uL2 from Streptococcus equi subsp. zooepidemicus (strain MGCS10565).